The following is a 480-amino-acid chain: NADH-quinone oxidoreductase subunit N (480 aa).

A run of 13 helical transmembrane segments spans residues 13 to 33 (ISPM…QFLI), 41 to 61 (PLWV…YHTT), 81 to 101 (VWLS…APPF), 107 to 127 (TLFP…MFLT), 132 to 152 (LIVI…MIGM), 167 to 187 (FLLG…LYGG), 212 to 232 (LGLG…PFHS), 245 to 265 (ITGF…IILF), 276 to 296 (VWKY…NIVA), 314 to 334 (AGYI…YYLF), 373 to 393 (ALAL…IGFW), 413 to 433 (LLFG…KITI), and 454 to 474 (PTLG…WIFF).

This sequence belongs to the complex I subunit 2 family. In terms of assembly, NDH-1 is composed of 14 different subunits. Subunits NuoA, H, J, K, L, M, N constitute the membrane sector of the complex.

It localises to the cell inner membrane. It carries out the reaction a quinone + NADH + 5 H(+)(in) = a quinol + NAD(+) + 4 H(+)(out). Functionally, NDH-1 shuttles electrons from NADH, via FMN and iron-sulfur (Fe-S) centers, to quinones in the respiratory chain. The immediate electron acceptor for the enzyme in this species is believed to be ubiquinone. Couples the redox reaction to proton translocation (for every two electrons transferred, four hydrogen ions are translocated across the cytoplasmic membrane), and thus conserves the redox energy in a proton gradient. This is NADH-quinone oxidoreductase subunit N from Leptospira biflexa serovar Patoc (strain Patoc 1 / Ames).